The sequence spans 81 residues: X antigen family member 1 (81 aa).

Lysine 12 participates in a covalent cross-link: Glycyl lysine isopeptide (Lys-Gly) (interchain with G-Cter in SUMO2). Serine 20 is subject to Phosphoserine. Residues lysine 61 and lysine 65 each participate in a glycyl lysine isopeptide (Lys-Gly) (interchain with G-Cter in SUMO2) cross-link.

This sequence belongs to the GAGE family. As to expression, in normal tissues, highly expressed in testis. Expressed also in many different types of cancers: highly expressed in breast cancer, prostate cancer and many types of lung cancers, including squamous cell carcinoma, small cell carcinoma, non-small cell carcinoma, and adenocarcinoma, as well as in Ewing's cell lines, in some Ewing's sarcoma patient samples, and in one of one alveolar rhabdomyosarcoma patient sample.

This is X antigen family member 1 from Homo sapiens (Human).